Reading from the N-terminus, the 205-residue chain is Small ribosomal subunit protein mS26 (205 aa).

The N-terminal 27 residues, 1–27 (MLRALSRLGAGTPCRPRAPLVLPARGR), are a transit peptide targeting the mitochondrion.

This sequence belongs to the mitochondrion-specific ribosomal protein mS26 family. Component of the mitochondrial small ribosomal subunit (mt-SSU). Mature mammalian 55S mitochondrial ribosomes consist of a small (28S) and a large (39S) subunit. The 28S small subunit contains a 12S ribosomal RNA (12S mt-rRNA) and 30 different proteins. The 39S large subunit contains a 16S rRNA (16S mt-rRNA), a copy of mitochondrial valine transfer RNA (mt-tRNA(Val)), which plays an integral structural role, and 52 different proteins.

It is found in the mitochondrion. The protein is Small ribosomal subunit protein mS26 (MRPS26) of Homo sapiens (Human).